The sequence spans 544 residues: Calcium-dependent protein kinase 6 (544 aa).

The interval 1–47 (MGNSCRGSFKDKIYEGNHSRPEENSKSTTTTVSSVHSPTTDQDFSKQ) is disordered. Residue G2 is the site of N-myristoyl glycine attachment. A compositionally biased stretch (basic and acidic residues) spans 8–25 (SFKDKIYEGNHSRPEENS). Over residues 26-40 (KSTTTTVSSVHSPTT) the composition is skewed to low complexity. Positions 85–343 (YTLSRKLGQG…AHEVLRHPWI (259 aa)) constitute a Protein kinase domain. ATP-binding positions include 91 to 99 (LGQGQFGTT) and K114. Residue D209 is the Proton acceptor of the active site. S249 carries the phosphoserine modification. Positions 349–379 (APDRALDPAVLSRLKQFSAMNKLKKMALKVI) are autoinhibitory domain. 4 EF-hand domains span residues 386 to 421 (EEIA…YGST), 422 to 457 (LKDT…LNKL), 458 to 493 (EREE…HGMT), and 497 to 527 (LEDI…GNAG). Positions 399, 401, 403, 410, 435, 437, 439, 441, 446, 471, 473, 475, 477, 482, 505, 507, 509, 511, and 516 each coordinate Ca(2+).

The protein belongs to the protein kinase superfamily. Ser/Thr protein kinase family. CDPK subfamily. Interacts with SLAC1. Interacts with FD. As to expression, expressed in both guard cells and mesophyll cells. Expressed in the shoot apical meristem.

The protein localises to the cell membrane. It localises to the nucleus. The catalysed reaction is L-seryl-[protein] + ATP = O-phospho-L-seryl-[protein] + ADP + H(+). The enzyme catalyses L-threonyl-[protein] + ATP = O-phospho-L-threonyl-[protein] + ADP + H(+). Its activity is regulated as follows. Activated by calcium. Autophosphorylation may play an important role in the regulation of the kinase activity. Its function is as follows. May play a role in signal transduction pathways that involve calcium as a second messenger. Functions in abscisic acid (ABA) regulation of guard cell S-type anion- and Ca(2+)-permeable channels and stomatal closure. Phosphorylates FD. This Arabidopsis thaliana (Mouse-ear cress) protein is Calcium-dependent protein kinase 6 (CPK6).